A 351-amino-acid polypeptide reads, in one-letter code: Hydroxymethylglutaryl-CoA synthase (351 aa).

Glu-80 functions as the Proton donor/acceptor in the catalytic mechanism. Catalysis depends on Cys-112, which acts as the Acyl-thioester intermediate. 2 residues coordinate (3S)-3-hydroxy-3-methylglutaryl-CoA: Cys-112 and Ser-153. Arg-199 lines the CoA pocket. 2 residues coordinate (3S)-3-hydroxy-3-methylglutaryl-CoA: Thr-201 and His-234. The active-site Proton donor/acceptor is His-234. Lys-239 serves as a coordination point for CoA. (3S)-3-hydroxy-3-methylglutaryl-CoA contacts are provided by Arg-243, Asn-266, and Ser-296.

This sequence belongs to the thiolase-like superfamily. Archaeal HMG-CoA synthase family. Interacts with acetoacetyl-CoA thiolase that catalyzes the precedent step in the pathway and with a DUF35 protein. The acetoacetyl-CoA thiolase/HMG-CoA synthase complex channels the intermediate via a fused CoA-binding site, which allows for efficient coupling of the endergonic thiolase reaction with the exergonic HMGCS reaction.

It carries out the reaction acetoacetyl-CoA + acetyl-CoA + H2O = (3S)-3-hydroxy-3-methylglutaryl-CoA + CoA + H(+). Its pathway is metabolic intermediate biosynthesis; (R)-mevalonate biosynthesis; (R)-mevalonate from acetyl-CoA: step 2/3. Its function is as follows. Catalyzes the condensation of acetyl-CoA with acetoacetyl-CoA to form 3-hydroxy-3-methylglutaryl-CoA (HMG-CoA). Functions in the mevalonate (MVA) pathway leading to isopentenyl diphosphate (IPP), a key precursor for the biosynthesis of isoprenoid compounds that are building blocks of archaeal membrane lipids. The protein is Hydroxymethylglutaryl-CoA synthase of Thermoplasma acidophilum (strain ATCC 25905 / DSM 1728 / JCM 9062 / NBRC 15155 / AMRC-C165).